A 305-amino-acid chain; its full sequence is GMP synthase [glutamine-hydrolyzing] subunit B (305 aa).

The GMPS ATP-PPase domain maps to 2-185 (VETEEFIAEA…LGLEEVISER (184 aa)). ATP is bound at residue 29-35 (SGGVDSS).

As to quaternary structure, heterodimer composed of a glutamine amidotransferase subunit (A) and a GMP-binding subunit (B).

It carries out the reaction XMP + L-glutamine + ATP + H2O = GMP + L-glutamate + AMP + diphosphate + 2 H(+). It participates in purine metabolism; GMP biosynthesis; GMP from XMP (L-Gln route): step 1/1. In terms of biological role, catalyzes the synthesis of GMP from XMP. The polypeptide is GMP synthase [glutamine-hydrolyzing] subunit B (Halorubrum lacusprofundi (strain ATCC 49239 / DSM 5036 / JCM 8891 / ACAM 34)).